Reading from the N-terminus, the 276-residue chain is Diaminopimelate epimerase (276 aa).

Residues Asn-13, Gln-46, and Asn-66 each contribute to the substrate site. The active-site Proton donor is Cys-75. Substrate is bound by residues 76 to 77, Asn-159, Asn-192, and 210 to 211; these read GN and ER. The active-site Proton acceptor is the Cys-219. 220–221 is a binding site for substrate; sequence GT.

The protein belongs to the diaminopimelate epimerase family. As to quaternary structure, homodimer.

It localises to the cytoplasm. It carries out the reaction (2S,6S)-2,6-diaminopimelate = meso-2,6-diaminopimelate. It functions in the pathway amino-acid biosynthesis; L-lysine biosynthesis via DAP pathway; DL-2,6-diaminopimelate from LL-2,6-diaminopimelate: step 1/1. Catalyzes the stereoinversion of LL-2,6-diaminopimelate (L,L-DAP) to meso-diaminopimelate (meso-DAP), a precursor of L-lysine and an essential component of the bacterial peptidoglycan. This chain is Diaminopimelate epimerase, found in Hahella chejuensis (strain KCTC 2396).